The following is an 88-amino-acid chain: Small ribosomal subunit protein uS15c (88 aa).

The protein belongs to the universal ribosomal protein uS15 family. Part of the 30S ribosomal subunit.

The protein resides in the plastid. It is found in the chloroplast. This chain is Small ribosomal subunit protein uS15c (rps15), found in Draba nemorosa (Woodland whitlowgrass).